A 366-amino-acid chain; its full sequence is D-alanine--D-alanine ligase (366 aa).

In terms of domain architecture, ATP-grasp spans 140 to 346; sequence KALFAQSDLP…YGELLSRLVD (207 aa). 173 to 228 lines the ATP pocket; sequence EDRLGYPCFVKPANMGSSVGISKATNRAELVAAFDDAVRYDRKLIVEKGINVREIE. Mg(2+)-binding residues include aspartate 299, glutamate 313, and asparagine 315.

This sequence belongs to the D-alanine--D-alanine ligase family. Mg(2+) serves as cofactor. Mn(2+) is required as a cofactor.

It localises to the cytoplasm. It catalyses the reaction 2 D-alanine + ATP = D-alanyl-D-alanine + ADP + phosphate + H(+). Its pathway is cell wall biogenesis; peptidoglycan biosynthesis. Cell wall formation. The chain is D-alanine--D-alanine ligase from Heliobacterium modesticaldum (strain ATCC 51547 / Ice1).